Here is a 126-residue protein sequence, read N- to C-terminus: Histone H2B type 1-H (126 aa).

The segment covering M1–K12 has biased composition (low complexity). The interval M1–E36 is disordered. An N-acetylproline modification is found at P2. K6 is subject to N6-(2-hydroxyisobutyryl)lysine; alternate. K6 carries the N6-(beta-hydroxybutyryl)lysine; alternate modification. N6-acetyllysine; alternate is present on K6. K6 bears the N6-butyryllysine; alternate mark. At K6 the chain carries N6-crotonyllysine; alternate. Residue K6 is modified to N6-lactoyllysine; alternate. K6 is covalently cross-linked (Glycyl lysine isopeptide (Lys-Gly) (interchain with G-Cter in SUMO2); alternate). Residue S7 is modified to ADP-ribosylserine. At K12 the chain carries N6-(beta-hydroxybutyryl)lysine; alternate. An N6-acetyllysine; alternate mark is found at K12 and K13. Residues K12 and K13 each carry the N6-crotonyllysine; alternate modification. K12 bears the N6-lactoyllysine; alternate mark. K13 carries the post-translational modification N6-(2-hydroxyisobutyryl)lysine; alternate. Residue S15 is modified to Phosphoserine; by STK4/MST1. K16, K17, K21, and K24 each carry N6-acetyllysine; alternate. 4 positions are modified to N6-crotonyllysine; alternate: K16, K17, K21, and K24. N6-lactoyllysine; alternate is present on residues K16, K17, K21, and K24. N6-(beta-hydroxybutyryl)lysine; alternate occurs at positions 17 and 21. K17 is modified (N6-glutaryllysine; alternate). K21 and K24 each carry N6-(2-hydroxyisobutyryl)lysine; alternate. The residue at position 21 (K21) is an N6-butyryllysine; alternate. Residue K21 forms a Glycyl lysine isopeptide (Lys-Gly) (interchain with G-Cter in SUMO2); alternate linkage. K25 bears the N6-(2-hydroxyisobutyryl)lysine mark. K35 is modified (N6-(2-hydroxyisobutyryl)lysine; alternate). Position 35 is an N6-(beta-hydroxybutyryl)lysine; alternate (K35). The residue at position 35 (K35) is an N6-crotonyllysine; alternate. The residue at position 35 (K35) is an N6-glutaryllysine; alternate. Position 35 is an N6-succinyllysine; alternate (K35). K35 participates in a covalent cross-link: Glycyl lysine isopeptide (Lys-Gly) (interchain with G-Cter in ubiquitin); alternate. E36 bears the PolyADP-ribosyl glutamic acid mark. S37 carries the post-translational modification Phosphoserine; by AMPK. K44, K47, and K58 each carry N6-(2-hydroxyisobutyryl)lysine; alternate. K44 bears the N6-lactoyllysine; alternate mark. An N6-glutaryllysine; alternate mark is found at K44 and K47. Position 47 is an N6-methyllysine; alternate (K47). N6,N6-dimethyllysine; alternate is present on K58. Dimethylated arginine is present on R80. An N6-(2-hydroxyisobutyryl)lysine; alternate modification is found at K86. K86 carries the post-translational modification N6-(beta-hydroxybutyryl)lysine; alternate. At K86 the chain carries N6-acetyllysine; alternate. At K86 the chain carries N6-lactoyllysine; alternate. K86 bears the N6,N6,N6-trimethyllysine; alternate mark. 2 positions are modified to omega-N-methylarginine: R87 and R93. K109 bears the N6-(2-hydroxyisobutyryl)lysine; alternate mark. K109 is modified (N6-lactoyllysine; alternate). Position 109 is an N6-glutaryllysine; alternate (K109). K109 carries the post-translational modification N6-methyllysine; alternate. S113 carries O-linked (GlcNAc) serine glycosylation. T116 carries the post-translational modification Phosphothreonine. 2 positions are modified to N6-(2-hydroxyisobutyryl)lysine; alternate: K117 and K121. An N6-(beta-hydroxybutyryl)lysine; alternate mark is found at K117 and K121. An N6-lactoyllysine; alternate mark is found at K117 and K121. Residues K117 and K121 each carry the N6-glutaryllysine; alternate modification. 2 positions are modified to N6-succinyllysine; alternate: K117 and K121. Position 117 is an N6-malonyllysine; alternate (K117). K117 is modified (N6-methylated lysine; alternate). K121 participates in a covalent cross-link: Glycyl lysine isopeptide (Lys-Gly) (interchain with G-Cter in ubiquitin); alternate.

Belongs to the histone H2B family. As to quaternary structure, the nucleosome is a histone octamer containing two molecules each of H2A, H2B, H3 and H4 assembled in one H3-H4 heterotetramer and two H2A-H2B heterodimers. The octamer wraps approximately 147 bp of DNA. Found in a complex with PPAR9; DTX3L AND STAT1; the interaction is likely to induce DTX3L-mediated ubiquitination of H2BC9/H2BJ. In terms of processing, monoubiquitination at Lys-35 (H2BK34Ub) by the MSL1/MSL2 dimer is required for histone H3 'Lys-4' (H3K4me) and 'Lys-79' (H3K79me) methylation and transcription activation at specific gene loci, such as HOXA9 and MEIS1 loci. Similarly, monoubiquitination at Lys-121 (H2BK120Ub) by the RNF20/40 complex gives a specific tag for epigenetic transcriptional activation and is also prerequisite for histone H3 'Lys-4' and 'Lys-79' methylation. It also functions cooperatively with the FACT dimer to stimulate elongation by RNA polymerase II. H2BK120Ub also acts as a regulator of mRNA splicing: deubiquitination by USP49 is required for efficient cotranscriptional splicing of a large set of exons. Monoubiquitinated by DTX3L upon encephalomyocarditis virus (EMCV)-mediated infection. Post-translationally, phosphorylation at Ser-37 (H2BS36ph) by AMPK in response to stress promotes transcription. Phosphorylated on Ser-15 (H2BS14ph) by STK4/MST1 during apoptosis; which facilitates apoptotic chromatin condensation. Also phosphorylated on Ser-15 in response to DNA double strand breaks (DSBs), and in correlation with somatic hypermutation and immunoglobulin class-switch recombination. GlcNAcylation at Ser-113 promotes monoubiquitination of Lys-121. It fluctuates in response to extracellular glucose, and associates with transcribed genes. In terms of processing, ADP-ribosylated by PARP1 or PARP2 on Ser-7 (H2BS6ADPr) in response to DNA damage. H2BS6ADPr promotes recruitment of CHD1L. Poly ADP-ribosylation on Glu-36 (H2BE35ADPr) by PARP1 regulates adipogenesis: it inhibits phosphorylation at Ser-37 (H2BS36ph), thereby blocking expression of pro-adipogenetic genes. Post-translationally, crotonylation (Kcr) is specifically present in male germ cells and marks testis-specific genes in post-meiotic cells, including X-linked genes that escape sex chromosome inactivation in haploid cells. Crotonylation marks active promoters and enhancers and confers resistance to transcriptional repressors. It is also associated with post-meiotically activated genes on autosomes. Lactylated in macrophages by EP300/P300 by using lactoyl-CoA directly derived from endogenous or exogenous lactate, leading to stimulates gene transcription.

It is found in the nucleus. The protein localises to the chromosome. Functionally, core component of nucleosome. Nucleosomes wrap and compact DNA into chromatin, limiting DNA accessibility to the cellular machineries which require DNA as a template. Histones thereby play a central role in transcription regulation, DNA repair, DNA replication and chromosomal stability. DNA accessibility is regulated via a complex set of post-translational modifications of histones, also called histone code, and nucleosome remodeling. The sequence is that of Histone H2B type 1-H from Homo sapiens (Human).